The primary structure comprises 652 residues: DNA ligase (652 aa).

Residues 29–33, 78–79, and glutamate 107 contribute to the NAD(+) site; these read DSEYD and SL. The N6-AMP-lysine intermediate role is filled by lysine 109. Positions 130, 164, 278, and 302 each coordinate NAD(+). Positions 395, 398, 413, and 418 each coordinate Zn(2+). The BRCT domain occupies 577–652; sequence AADAVLSGKT…IQDEAWLEQL (76 aa).

Belongs to the NAD-dependent DNA ligase family. LigA subfamily. It depends on Mg(2+) as a cofactor. Requires Mn(2+) as cofactor.

It carries out the reaction NAD(+) + (deoxyribonucleotide)n-3'-hydroxyl + 5'-phospho-(deoxyribonucleotide)m = (deoxyribonucleotide)n+m + AMP + beta-nicotinamide D-nucleotide.. Functionally, DNA ligase that catalyzes the formation of phosphodiester linkages between 5'-phosphoryl and 3'-hydroxyl groups in double-stranded DNA using NAD as a coenzyme and as the energy source for the reaction. It is essential for DNA replication and repair of damaged DNA. The sequence is that of DNA ligase from Streptococcus gordonii (strain Challis / ATCC 35105 / BCRC 15272 / CH1 / DL1 / V288).